The following is a 545-amino-acid chain: Prolyl 3-hydroxylase OGFOD1 (545 aa).

Residues 1-23 (MNGKRPADPGPARPMKKGKKQVS) form a disordered region. The Fe2OG dioxygenase domain occupies 137–239 (PTIDMSCAKY…RLSISGWFYG (103 aa)). Residues histidine 155 and aspartate 157 each contribute to the Fe cation site. Tyrosine 169 is a binding site for 2-oxoglutarate. Histidine 218 serves as a coordination point for Fe cation. Arginine 230 provides a ligand contact to 2-oxoglutarate. A compositionally biased stretch (acidic residues) spans 371–380 (SEDDETEEKG). Residues 371–437 (SEDDETEEKG…EAKKESSVPM (67 aa)) are disordered. Residues 383 to 393 (ETASAAAGTEE) show a composition bias toward low complexity. Over residues 402–417 (PENNQVAAGSHSQENG) the composition is skewed to polar residues.

The protein belongs to the TPA1 family. In terms of assembly, monomer. Fe(2+) is required as a cofactor. It depends on L-ascorbate as a cofactor.

It localises to the cytoplasm. Its subcellular location is the nucleus. It carries out the reaction [ribosomal protein uS12]-L-proline + 2-oxoglutarate + O2 = [ribosomal protein uS12]-(3S)-3-hydroxy-L-proline + succinate + CO2. Prolyl 3-hydroxylase that catalyzes 3-hydroxylation of 'Pro-62' of small ribosomal subunit uS12 (RPS23), thereby regulating protein translation termination efficiency. Involved in stress granule formation. The polypeptide is Prolyl 3-hydroxylase OGFOD1 (Ogfod1) (Mus musculus (Mouse)).